The primary structure comprises 533 residues: MASTTTCTRFTDEYQLFEELGKGAFSVVRRCMKIPTGQEYAAKIINTKKLSARDHQKLEREARICRLLKHPNIVRLHDSISEEGFHYLVFDLVTGGELFEDIVAREYYSEADASHCIQQILESVNHCHLNGIVHRDLKPENLLLASKSKGAAVKLADFGLAIEVQGDQQAWFGFAGTPGYLSPEVLRKDPYGKPVDMWACGVILYILLVGYPPFWDEDQHRLYQQIKAGAYDFPSPEWDTVTPEAKDLINKMLTINPAKRITASEALKHPWISHRATVASMMHRQETVDCLKKFNARRKLKGAILTTMLATRNFSAAKSLLKKPDGVKINNKANVVTSPKENIPTPALEPQTTVIHNPDGNKESTESSNTTIEDEDVKARKQEIIKVTEQLIEAINNGDFEAYTKICDPGLTAFEPEALGNLVEGMDFHRFYFENALSKSNKPIHTIILNPHVHLVGEDAACIAYIRLTQYMDGSGMPKTMQSEETRVWHRRDGKWQNVHFHRSGSPTVPIKPPCIPNGKENYSGGTSLWQNI.

Ala-2 bears the N-acetylalanine mark. The Protein kinase domain maps to 14–272 (YQLFEELGKG…ASEALKHPWI (259 aa)). ATP is bound by residues 20 to 28 (LGKGAFSVV) and Lys-43. Asp-136 functions as the Proton acceptor in the catalytic mechanism. The segment at 283 to 292 (HRQETVDCLK) is autoinhibitory domain. Thr-287 carries the phosphothreonine; by autocatalysis modification. Positions 291–301 (LKKFNARRKLK) are calmodulin-binding. Phosphothreonine; by autocatalysis is present on residues Thr-306 and Thr-307. Residue Ser-315 is modified to Phosphoserine. At Lys-318 the chain carries N6-acetyllysine. Ser-319 and Ser-364 each carry phosphoserine. The segment at 337-375 (TSPKENIPTPALEPQTTVIHNPDGNKESTESSNTTIEDE) is disordered. Thr-365 is modified (phosphothreonine). At Ser-367 the chain carries Phosphoserine. Phosphothreonine occurs at positions 370 and 371. Phosphoserine occurs at positions 438, 524, and 528.

This sequence belongs to the protein kinase superfamily. CAMK Ser/Thr protein kinase family. CaMK subfamily. In terms of assembly, CAMK2 is composed of 4 different chains: alpha (CAMK2A), beta (CAMK2B), gamma (CAMK2G), and delta (CAMK2D). The different isoforms assemble into homo- or heteromultimeric holoenzymes composed of 12 subunits with two hexameric rings stacked one on top of the other. Interacts with RRAD and CACNB2. Autophosphorylation of Thr-287 following activation by Ca(2+)/calmodulin. Phosphorylation of Thr-287 locks the kinase into an activated state. In terms of tissue distribution, expressed in liver.

The protein resides in the cell membrane. It is found in the sarcolemma. The protein localises to the sarcoplasmic reticulum membrane. The catalysed reaction is L-seryl-[protein] + ATP = O-phospho-L-seryl-[protein] + ADP + H(+). It catalyses the reaction L-threonyl-[protein] + ATP = O-phospho-L-threonyl-[protein] + ADP + H(+). With respect to regulation, activated by Ca(2+)/calmodulin. Binding of calmodulin results in conformational change that relieves intrasteric autoinhibition and allows autophosphorylation of Thr-287 which turns the kinase in a constitutively active form and confers to the kinase a Ca(2+)-independent activity. Its function is as follows. Calcium/calmodulin-dependent protein kinase involved in the regulation of Ca(2+) homeostatis and excitation-contraction coupling (ECC) in heart by targeting ion channels, transporters and accessory proteins involved in Ca(2+) influx into the myocyte, Ca(2+) release from the sarcoplasmic reticulum (SR), SR Ca(2+) uptake and Na(+) and K(+) channel transport. Targets also transcription factors and signaling molecules to regulate heart function. In its activated form, is involved in the pathogenesis of dilated cardiomyopathy and heart failure. Contributes to cardiac decompensation and heart failure by regulating SR Ca(2+) release via direct phosphorylation of RYR2 Ca(2+) channel on 'Ser-2808'. In the nucleus, phosphorylates the MEF2 repressor HDAC4, promoting its nuclear export and binding to 14-3-3 protein, and expression of MEF2 and genes involved in the hypertrophic program. Is essential for left ventricular remodeling responses to myocardial infarction. In pathological myocardial remodeling acts downstream of the beta adrenergic receptor signaling cascade to regulate key proteins involved in ECC. Regulates Ca(2+) influx to myocytes by binding and phosphorylating the L-type Ca(2+) channel subunit beta-2 CACNB2. In addition to Ca(2+) channels, can target and regulate the cardiac sarcolemmal Na(+) channel Nav1.5/SCN5A and the K+ channel Kv4.3/KCND3, which contribute to arrhythmogenesis in heart failure. Phosphorylates phospholamban (PLN/PLB), an endogenous inhibitor of SERCA2A/ATP2A2, contributing to the enhancement of SR Ca(2+) uptake that may be important in frequency-dependent acceleration of relaxation (FDAR) and maintenance of contractile function during acidosis. May participate in the modulation of skeletal muscle function in response to exercise, by regulating SR Ca(2+) transport through phosphorylation of PLN/PLB and triadin, a ryanodine receptor-coupling factor. In response to interferon-gamma (IFN-gamma) stimulation, catalyzes phosphorylation of STAT1, stimulating the JAK-STAT signaling pathway. The sequence is that of Calcium/calmodulin-dependent protein kinase type II subunit delta (CAMK2D) from Oryctolagus cuniculus (Rabbit).